The primary structure comprises 200 residues: Elongation factor Ts (200 aa).

Positions 80 to 83 are involved in Mg(2+) ion dislocation from EF-Tu; that stretch reads TDFV.

The protein belongs to the EF-Ts family.

The protein localises to the cytoplasm. Functionally, associates with the EF-Tu.GDP complex and induces the exchange of GDP to GTP. It remains bound to the aminoacyl-tRNA.EF-Tu.GTP complex up to the GTP hydrolysis stage on the ribosome. This chain is Elongation factor Ts, found in Caldanaerobacter subterraneus subsp. tengcongensis (strain DSM 15242 / JCM 11007 / NBRC 100824 / MB4) (Thermoanaerobacter tengcongensis).